Consider the following 232-residue polypeptide: Aprataxin-like protein (232 aa).

Positions 38 to 160 (LKVYIESPES…MTLDHVSPSL (123 aa)) constitute an HIT domain. 3 interaction with DNA regions span residues 63–67 (DMFPK), 138–149 (HAGPSMNNLHLH), and 161–165 (KNSAH). His147 acts as the Nucleophile in catalysis. Zn(2+) contacts are provided by Cys200 and Cys203. Residues 209 to 212 (RHFT) are interaction with DNA. Positions 217 and 221 each coordinate Zn(2+).

As to quaternary structure, monomer.

Its subcellular location is the nucleus. It is found in the cytoplasm. It carries out the reaction a 5'-end adenosine-5'-diphospho-5'-2'-deoxyribonucleoside-DNA + H2O = a 5'-end 5'-phospho-2'-deoxyribonucleoside-DNA + AMP + 2 H(+). The enzyme catalyses a 5'-end adenosine-5'-diphospho-5'-ribonucleoside-2'-deoxyribonucleotide-DNA + H2O = a 5'-end 5'-phospho-ribonucleoside-2'-deoxyribonucleotide-DNA + AMP + 2 H(+). It catalyses the reaction a 3'-end 2'-deoxyribonucleotide-3'-diphospho-5'-guanosine-DNA + H2O = a 3'-end 2'-deoxyribonucleotide 3'-phosphate-DNA + GMP + 2 H(+). DNA-binding protein involved in single-strand DNA break repair, double-strand DNA break repair and base excision repair. Resolves abortive DNA ligation intermediates formed either at base excision sites, or when DNA ligases attempt to repair non-ligatable breaks induced by reactive oxygen species. Catalyzes the release of adenylate groups covalently linked to 5'-phosphate termini, resulting in the production of 5'-phosphate termini that can be efficiently rejoined. Likewise, catalyzes the release of 3'-linked guanosine (DNAppG) and inosine (DNAppI) from DNA, but has higher specific activity with 5'-linked adenosine (AppDNA). The chain is Aprataxin-like protein (hnt3) from Schizosaccharomyces pombe (strain 972 / ATCC 24843) (Fission yeast).